A 236-amino-acid polypeptide reads, in one-letter code: UPF0280 protein Mlab_0453 (236 aa).

The protein belongs to the UPF0280 family.

The protein is UPF0280 protein Mlab_0453 of Methanocorpusculum labreanum (strain ATCC 43576 / DSM 4855 / Z).